The following is a 410-amino-acid chain: Cysteine desulfurase IscS (410 aa).

Residues 80–81 (AT), Asn-160, Gln-188, and 208–210 (SGH) contribute to the pyridoxal 5'-phosphate site. An N6-(pyridoxal phosphate)lysine modification is found at Lys-211. Thr-248 contributes to the pyridoxal 5'-phosphate binding site. The active-site Cysteine persulfide intermediate is the Cys-334. Cys-334 contributes to the [2Fe-2S] cluster binding site.

The protein belongs to the class-V pyridoxal-phosphate-dependent aminotransferase family. NifS/IscS subfamily. In terms of assembly, homodimer. Forms a heterotetramer with IscU, interacts with other sulfur acceptors. It depends on pyridoxal 5'-phosphate as a cofactor.

Its subcellular location is the cytoplasm. It carries out the reaction (sulfur carrier)-H + L-cysteine = (sulfur carrier)-SH + L-alanine. The protein operates within cofactor biosynthesis; iron-sulfur cluster biosynthesis. Master enzyme that delivers sulfur to a number of partners involved in Fe-S cluster assembly, tRNA modification or cofactor biosynthesis. Catalyzes the removal of elemental sulfur atoms from cysteine to produce alanine. Functions as a sulfur delivery protein for Fe-S cluster synthesis onto IscU, an Fe-S scaffold assembly protein, as well as other S acceptor proteins. This chain is Cysteine desulfurase IscS, found in Rickettsia rickettsii (strain Iowa).